Here is a 300-residue protein sequence, read N- to C-terminus: GTPase Era (300 aa).

In terms of domain architecture, Era-type G spans Arg-8–Glu-176. A G1 region spans residues Gly-16 to Ser-23. Gly-16–Ser-23 lines the GTP pocket. The tract at residues Gln-42–His-46 is G2. Residues Asp-63–Gly-66 are G3. GTP is bound by residues Asp-63–Met-67 and Asn-125–Asp-128. Residues Asn-125–Asp-128 form a G4 region. The G5 stretch occupies residues Ile-155–Ala-157. The 85-residue stretch at Val-199–Gly-283 folds into the KH type-2 domain.

Belongs to the TRAFAC class TrmE-Era-EngA-EngB-Septin-like GTPase superfamily. Era GTPase family. As to quaternary structure, monomer.

Its subcellular location is the cytoplasm. It is found in the cell inner membrane. Functionally, an essential GTPase that binds both GDP and GTP, with rapid nucleotide exchange. Plays a role in 16S rRNA processing and 30S ribosomal subunit biogenesis and possibly also in cell cycle regulation and energy metabolism. This Pseudomonas savastanoi pv. phaseolicola (strain 1448A / Race 6) (Pseudomonas syringae pv. phaseolicola (strain 1448A / Race 6)) protein is GTPase Era.